A 45-amino-acid chain; its full sequence is Amphipathic peptide Hj0164 (45 aa).

A signal peptide spans 1–23; that stretch reads MKSQAFFLLFLVVLLLATTQSEA. Residue phenylalanine 33 is modified to Phenylalanine amide. A propeptide spanning residues 37 to 45 is cleaved from the precursor; sequence SLRDVDTMK.

This sequence belongs to the non-disulfide-bridged peptide (NDBP) superfamily. Short antimicrobial peptide (group 4) family. Expressed by the venom gland.

Its subcellular location is the secreted. The protein resides in the target cell membrane. Amphipathic peptide that shows antibacterial activities. This is Amphipathic peptide Hj0164 from Hottentotta judaicus (Black scorpion).